We begin with the raw amino-acid sequence, 255 residues long: Hydroxyacylglutathione hydrolase (255 aa).

Zn(2+) contacts are provided by His-53, His-55, Asp-57, His-58, His-110, Asp-127, and His-165.

The protein belongs to the metallo-beta-lactamase superfamily. Glyoxalase II family. As to quaternary structure, monomer. Requires Zn(2+) as cofactor.

It carries out the reaction an S-(2-hydroxyacyl)glutathione + H2O = a 2-hydroxy carboxylate + glutathione + H(+). It participates in secondary metabolite metabolism; methylglyoxal degradation; (R)-lactate from methylglyoxal: step 2/2. Functionally, thiolesterase that catalyzes the hydrolysis of S-D-lactoyl-glutathione to form glutathione and D-lactic acid. The sequence is that of Hydroxyacylglutathione hydrolase from Xanthomonas campestris pv. campestris (strain 8004).